A 456-amino-acid polypeptide reads, in one-letter code: Adenylosuccinate lyase (456 aa).

N(6)-(1,2-dicarboxyethyl)-AMP is bound by residues 15–16 (RY), 90–92 (NHD), and 122–123 (TS). The Proton donor/acceptor role is filled by His-171. Gln-248 contacts N(6)-(1,2-dicarboxyethyl)-AMP. The active-site Proton donor/acceptor is the Ser-296. N(6)-(1,2-dicarboxyethyl)-AMP contacts are provided by residues Ser-297, 302–304 (KVN), Asn-310, Arg-336, and 341–345 (STVLR).

The protein belongs to the lyase 1 family. Adenylosuccinate lyase subfamily. Homotetramer. Residues from neighboring subunits contribute catalytic and substrate-binding residues to each active site.

The catalysed reaction is N(6)-(1,2-dicarboxyethyl)-AMP = fumarate + AMP. It carries out the reaction (2S)-2-[5-amino-1-(5-phospho-beta-D-ribosyl)imidazole-4-carboxamido]succinate = 5-amino-1-(5-phospho-beta-D-ribosyl)imidazole-4-carboxamide + fumarate. It functions in the pathway purine metabolism; AMP biosynthesis via de novo pathway; AMP from IMP: step 2/2. The protein operates within purine metabolism; IMP biosynthesis via de novo pathway; 5-amino-1-(5-phospho-D-ribosyl)imidazole-4-carboxamide from 5-amino-1-(5-phospho-D-ribosyl)imidazole-4-carboxylate: step 2/2. Catalyzes two reactions in de novo purine nucleotide biosynthesis. Catalyzes the breakdown of 5-aminoimidazole- (N-succinylocarboxamide) ribotide (SAICAR or 2-[5-amino-1-(5-phospho-beta-D-ribosyl)imidazole-4-carboxamido]succinate) to 5-aminoimidazole-4-carboxamide ribotide (AICAR or 5-amino-1-(5-phospho-beta-D-ribosyl)imidazole-4-carboxamide) and fumarate, and of adenylosuccinate (ADS or N(6)-(1,2-dicarboxyethyl)-AMP) to adenosine monophosphate (AMP) and fumarate. The chain is Adenylosuccinate lyase (purB) from Pseudomonas aeruginosa (strain ATCC 15692 / DSM 22644 / CIP 104116 / JCM 14847 / LMG 12228 / 1C / PRS 101 / PAO1).